The chain runs to 208 residues: Small ribosomal subunit protein uS4 (208 aa).

Residues Gly-98–Lys-158 form the S4 RNA-binding domain.

This sequence belongs to the universal ribosomal protein uS4 family. As to quaternary structure, part of the 30S ribosomal subunit. Contacts protein S5. The interaction surface between S4 and S5 is involved in control of translational fidelity.

In terms of biological role, one of the primary rRNA binding proteins, it binds directly to 16S rRNA where it nucleates assembly of the body of the 30S subunit. Its function is as follows. With S5 and S12 plays an important role in translational accuracy. In Actinobacillus pleuropneumoniae serotype 5b (strain L20), this protein is Small ribosomal subunit protein uS4.